A 257-amino-acid chain; its full sequence is Imidazole glycerol phosphate synthase subunit HisF (257 aa).

Active-site residues include aspartate 11 and aspartate 130.

This sequence belongs to the HisA/HisF family. In terms of assembly, heterodimer of HisH and HisF.

Its subcellular location is the cytoplasm. It carries out the reaction 5-[(5-phospho-1-deoxy-D-ribulos-1-ylimino)methylamino]-1-(5-phospho-beta-D-ribosyl)imidazole-4-carboxamide + L-glutamine = D-erythro-1-(imidazol-4-yl)glycerol 3-phosphate + 5-amino-1-(5-phospho-beta-D-ribosyl)imidazole-4-carboxamide + L-glutamate + H(+). Its pathway is amino-acid biosynthesis; L-histidine biosynthesis; L-histidine from 5-phospho-alpha-D-ribose 1-diphosphate: step 5/9. In terms of biological role, IGPS catalyzes the conversion of PRFAR and glutamine to IGP, AICAR and glutamate. The HisF subunit catalyzes the cyclization activity that produces IGP and AICAR from PRFAR using the ammonia provided by the HisH subunit. This Photobacterium profundum (strain SS9) protein is Imidazole glycerol phosphate synthase subunit HisF.